A 387-amino-acid chain; its full sequence is 1-deoxy-D-xylulose 5-phosphate reductoisomerase (387 aa).

NADPH-binding residues include Thr11, Gly12, Ser13, Ile14, Gly37, Arg38, Gln39, and Asn127. Lys128 lines the 1-deoxy-D-xylulose 5-phosphate pocket. Position 129 (Glu129) interacts with NADPH. Asp153 contributes to the Mn(2+) binding site. 1-deoxy-D-xylulose 5-phosphate is bound by residues Ser154, Glu155, Ser179, and His200. Glu155 contributes to the Mn(2+) binding site. Gly206 is an NADPH binding site. 1-deoxy-D-xylulose 5-phosphate-binding residues include Ser213, Asn218, Lys219, and Glu222. Glu222 lines the Mn(2+) pocket.

It belongs to the DXR family. The cofactor is Mg(2+). Mn(2+) serves as cofactor.

The enzyme catalyses 2-C-methyl-D-erythritol 4-phosphate + NADP(+) = 1-deoxy-D-xylulose 5-phosphate + NADPH + H(+). It functions in the pathway isoprenoid biosynthesis; isopentenyl diphosphate biosynthesis via DXP pathway; isopentenyl diphosphate from 1-deoxy-D-xylulose 5-phosphate: step 1/6. In terms of biological role, catalyzes the NADPH-dependent rearrangement and reduction of 1-deoxy-D-xylulose-5-phosphate (DXP) to 2-C-methyl-D-erythritol 4-phosphate (MEP). The polypeptide is 1-deoxy-D-xylulose 5-phosphate reductoisomerase (Symbiobacterium thermophilum (strain DSM 24528 / JCM 14929 / IAM 14863 / T)).